A 208-amino-acid polypeptide reads, in one-letter code: MAKYNDAKCRMCRREGTKLFLKGDRCYTDKCAYDRRPYAPGQHGRARKKVSDYAVQLREKQKVRRVYGVLERQFRGYFHKADMAKGVTGANLLAILERRLDNVIYRLGFANSRQQARQLVRHGIFTLNGRKANIPSMQVRVGDIIEVPEASRKIPVIAEAQEVIARRGCPSWLEVDGPSFKGTVKALPQREDIQFPINEHLIVELYSK.

The region spanning 98–161 (RRLDNVIYRL…RKIPVIAEAQ (64 aa)) is the S4 RNA-binding domain.

This sequence belongs to the universal ribosomal protein uS4 family. Part of the 30S ribosomal subunit. Contacts protein S5. The interaction surface between S4 and S5 is involved in control of translational fidelity.

One of the primary rRNA binding proteins, it binds directly to 16S rRNA where it nucleates assembly of the body of the 30S subunit. In terms of biological role, with S5 and S12 plays an important role in translational accuracy. The protein is Small ribosomal subunit protein uS4 of Nitratidesulfovibrio vulgaris (strain DSM 19637 / Miyazaki F) (Desulfovibrio vulgaris).